Here is a 64-residue protein sequence, read N- to C-terminus: Large ribosomal subunit protein bL32 (64 aa).

This sequence belongs to the bacterial ribosomal protein bL32 family.

This is Large ribosomal subunit protein bL32 from Flavobacterium psychrophilum (strain ATCC 49511 / DSM 21280 / CIP 103535 / JIP02/86).